The sequence spans 239 residues: Leucine-rich repeat-containing protein 57 (239 aa).

Gly-2 carries N-myristoyl glycine lipidation. 8 LRR repeats span residues 39-60, 63-84, 86-107, 109-131, 132-153, 154-175, 177-197, and 202-222; these read NLRT…LIGK, LLKS…ICNL, KLET…FGQL, ALKT…CSLR, HLDV…VGEL, QVIE…ISCC, RLKI…PQSI, and QICL…RELE.

It localises to the membrane. This chain is Leucine-rich repeat-containing protein 57 (LRRC57), found in Homo sapiens (Human).